We begin with the raw amino-acid sequence, 573 residues long: Solute carrier family 41 member 2 (573 aa).

Residues 1–162 (MTNCKGRSTI…KESSSIMALQ (162 aa)) are Extracellular-facing. A helical membrane pass occupies residues 163 to 183 (ILVPFLLAGFGTVTAGMVLDI). Over 184-195 (VQHWDVFKNVTE) the chain is Cytoplasmic. Residues 196 to 216 (VFILVPALLGLKGNLEMTLAS) traverse the membrane as a helical segment. At 217–245 (RLSTAVNIGKMDSPIEKWNLIIGNLALKQ) the chain is on the extracellular side. Residues 246–266 (VQATVVGFLAAVAAVILGWIP) form a helical membrane-spanning segment. Residues 267–282 (EGKYSFSHSILLCSSS) are Cytoplasmic-facing. Residues 283–303 (VATAFIASLLQGIIMVGVIVG) traverse the membrane as a helical segment. The Extracellular segment spans residues 304–313 (SKKTGINPDN). Residues 314–334 (VATPIAASFGDLITLAILAWI) traverse the membrane as a helical segment. The Cytoplasmic segment spans residues 335–347 (SQGLYTCLETYYY). Residues 348–368 (VSPLVGAFFLALTPMGIVIAA) traverse the membrane as a helical segment. Residues 369–376 (KHPATRTV) lie on the Extracellular side of the membrane. The chain crosses the membrane as a helical span at residues 377 to 397 (LHSGWEPVITAMIISSIGGLI). Topologically, residues 398 to 406 (LDTTVSDPN) are cytoplasmic. A helical membrane pass occupies residues 407–427 (LVGIVVYTPVINGIGGNLVAI). At 428 to 469 (QASRISTYLHLHSIPGELPEEAKGCYYPCRTYYGTGVNNKSA) the chain is on the extracellular side. The chain crosses the membrane as a helical span at residues 470–490 (QVLLLLVIPGHLIFLYTIHLM). Topologically, residues 491–499 (KSGHTSLTP) are cytoplasmic. Residues 500-520 (IFIAVYLFAALLQVFTLLWIA) form a helical membrane-spanning segment. Topologically, residues 521-543 (DWMVHHFWKKGKDPDSFSIPYLT) are extracellular. Residues 544 to 564 (ALGDLLGTALLAVGFHFLWLI) form a helical membrane-spanning segment. Over 565-573 (GDRDGDVGD) the chain is Cytoplasmic.

Belongs to the SLC41A transporter family.

Its subcellular location is the cell membrane. The enzyme catalyses Mg(2+)(in) = Mg(2+)(out). It catalyses the reaction Mn(2+)(in) = Mn(2+)(out). The catalysed reaction is Co(2+)(in) = Co(2+)(out). It carries out the reaction Ni(2+)(in) = Ni(2+)(out). The enzyme catalyses Fe(2+)(in) = Fe(2+)(out). In terms of biological role, acts as a plasma-membrane magnesium transporter. Can also mediate the transport of other divalent metal cations in an order of Ba(2+) &gt; Ni(2+) &gt; Co(2+) &gt; Fe(2+) &gt; Mn(2+). The polypeptide is Solute carrier family 41 member 2 (SLC41A2) (Gallus gallus (Chicken)).